The primary structure comprises 455 residues: mRNA cleavage and polyadenylation factor CLP1 (455 aa).

The ATP site is built by Glu28 and Lys67. The disordered stretch occupies residues 112 to 131; it reads EAAARNNGGGRSAPHGPRVL. 137-142 contacts ATP; sequence GCGRTS.

Belongs to the Clp1 family. Clp1 subfamily. In terms of assembly, component of a pre-mRNA cleavage factor complex. Interacts directly with PCF11.

The protein localises to the nucleus. Functionally, required for endonucleolytic cleavage during polyadenylation-dependent pre-mRNA 3'-end formation. This chain is mRNA cleavage and polyadenylation factor CLP1, found in Pyricularia oryzae (strain 70-15 / ATCC MYA-4617 / FGSC 8958) (Rice blast fungus).